Here is a 230-residue protein sequence, read N- to C-terminus: Orotidine 5'-phosphate decarboxylase (230 aa).

Substrate is bound by residues D11, K34, D61 to T70, T117, R179, Q188, G208, and R209. Catalysis depends on K63, which acts as the Proton donor.

The protein belongs to the OMP decarboxylase family. Type 1 subfamily. As to quaternary structure, homodimer.

The enzyme catalyses orotidine 5'-phosphate + H(+) = UMP + CO2. Its pathway is pyrimidine metabolism; UMP biosynthesis via de novo pathway; UMP from orotate: step 2/2. Functionally, catalyzes the decarboxylation of orotidine 5'-monophosphate (OMP) to uridine 5'-monophosphate (UMP). This Streptococcus pyogenes serotype M18 (strain MGAS8232) protein is Orotidine 5'-phosphate decarboxylase.